We begin with the raw amino-acid sequence, 170 residues long: Adenine phosphoribosyltransferase (170 aa).

It belongs to the purine/pyrimidine phosphoribosyltransferase family. Homodimer.

It localises to the cytoplasm. The catalysed reaction is AMP + diphosphate = 5-phospho-alpha-D-ribose 1-diphosphate + adenine. The protein operates within purine metabolism; AMP biosynthesis via salvage pathway; AMP from adenine: step 1/1. Functionally, catalyzes a salvage reaction resulting in the formation of AMP, that is energically less costly than de novo synthesis. The protein is Adenine phosphoribosyltransferase of Bacillus pumilus (strain SAFR-032).